A 210-amino-acid polypeptide reads, in one-letter code: Large ribosomal subunit protein uL3 (210 aa).

The segment at 120 to 143 (FQGNIKKDGQSRGPMGHGSRYHRR) is disordered.

This sequence belongs to the universal ribosomal protein uL3 family. As to quaternary structure, part of the 50S ribosomal subunit. Forms a cluster with proteins L14 and L19.

Functionally, one of the primary rRNA binding proteins, it binds directly near the 3'-end of the 23S rRNA, where it nucleates assembly of the 50S subunit. This is Large ribosomal subunit protein uL3 from Latilactobacillus sakei subsp. sakei (strain 23K) (Lactobacillus sakei subsp. sakei).